The following is a 346-amino-acid chain: 4-hydroxy-3-methylbut-2-enyl diphosphate reductase (346 aa).

Cys19 provides a ligand contact to [4Fe-4S] cluster. The (2E)-4-hydroxy-3-methylbut-2-enyl diphosphate site is built by His48 and His84. The dimethylallyl diphosphate site is built by His48 and His84. Residues His48 and His84 each coordinate isopentenyl diphosphate. Cys106 lines the [4Fe-4S] cluster pocket. A (2E)-4-hydroxy-3-methylbut-2-enyl diphosphate-binding site is contributed by His134. His134 lines the dimethylallyl diphosphate pocket. His134 contacts isopentenyl diphosphate. The Proton donor role is filled by Glu136. A (2E)-4-hydroxy-3-methylbut-2-enyl diphosphate-binding site is contributed by Thr175. Cys205 is a [4Fe-4S] cluster binding site. Ser233, Ser234, Asn235, and Ser278 together coordinate (2E)-4-hydroxy-3-methylbut-2-enyl diphosphate. The dimethylallyl diphosphate site is built by Ser233, Ser234, Asn235, and Ser278. Residues Ser233, Ser234, Asn235, and Ser278 each coordinate isopentenyl diphosphate.

Belongs to the IspH family. [4Fe-4S] cluster is required as a cofactor.

It carries out the reaction isopentenyl diphosphate + 2 oxidized [2Fe-2S]-[ferredoxin] + H2O = (2E)-4-hydroxy-3-methylbut-2-enyl diphosphate + 2 reduced [2Fe-2S]-[ferredoxin] + 2 H(+). The enzyme catalyses dimethylallyl diphosphate + 2 oxidized [2Fe-2S]-[ferredoxin] + H2O = (2E)-4-hydroxy-3-methylbut-2-enyl diphosphate + 2 reduced [2Fe-2S]-[ferredoxin] + 2 H(+). Its pathway is isoprenoid biosynthesis; dimethylallyl diphosphate biosynthesis; dimethylallyl diphosphate from (2E)-4-hydroxy-3-methylbutenyl diphosphate: step 1/1. It functions in the pathway isoprenoid biosynthesis; isopentenyl diphosphate biosynthesis via DXP pathway; isopentenyl diphosphate from 1-deoxy-D-xylulose 5-phosphate: step 6/6. Functionally, catalyzes the conversion of 1-hydroxy-2-methyl-2-(E)-butenyl 4-diphosphate (HMBPP) into a mixture of isopentenyl diphosphate (IPP) and dimethylallyl diphosphate (DMAPP). Acts in the terminal step of the DOXP/MEP pathway for isoprenoid precursor biosynthesis. The protein is 4-hydroxy-3-methylbut-2-enyl diphosphate reductase of Brucella abortus (strain S19).